We begin with the raw amino-acid sequence, 317 residues long: MPVQGSQRRLLGSLNSTPTATPRLGLAANQTGARCLEVSIPDGLFLSLGLVSLVENVLVVVAIARNRNLHSPMYCFICCLALSDLLVSGSNMLDTAVILLLEAGALAARAAVVQQLDNVIDVITCSSMLSSLCFLGAIAVDRYISIFYALRYHSIVTLRRARRVVAAIWVASILFSTLFIAYCDHAAVLLCLVVFFLAMLVLMAVLYVHMLARACQHAQGIAQLHKRQRPAHQGVGLKGAATLTILLGIFFLCWGPFFLHLTLIVLCPQHPTCSCIFKNFNLFLTLIICNAIIDPLIYAFRSQELRRTLKKVLLCSW.

At 1 to 37 (MPVQGSQRRLLGSLNSTPTATPRLGLAANQTGARCLE) the chain is on the extracellular side. The N-linked (GlcNAc...) asparagine glycan is linked to asparagine 29. The chain crosses the membrane as a helical span at residues 38-63 (VSIPDGLFLSLGLVSLVENVLVVVAI). Residues 64–72 (ARNRNLHSP) are Cytoplasmic-facing. The chain crosses the membrane as a helical span at residues 73 to 93 (MYCFICCLALSDLLVSGSNML). At 94-118 (DTAVILLLEAGALAARAAVVQQLDN) the chain is on the extracellular side. The chain crosses the membrane as a helical span at residues 119–140 (VIDVITCSSMLSSLCFLGAIAV). Residues 141-163 (DRYISIFYALRYHSIVTLRRARR) lie on the Cytoplasmic side of the membrane. The helical transmembrane segment at 164–183 (VVAAIWVASILFSTLFIAYC) threads the bilayer. Over 184-191 (DHAAVLLC) the chain is Extracellular. The helical transmembrane segment at 192–211 (LVVFFLAMLVLMAVLYVHML) threads the bilayer. Over 212–240 (ARACQHAQGIAQLHKRQRPAHQGVGLKGA) the chain is Cytoplasmic. A helical membrane pass occupies residues 241 to 266 (ATLTILLGIFFLCWGPFFLHLTLIVL). Topologically, residues 267 to 279 (CPQHPTCSCIFKN) are extracellular. The chain crosses the membrane as a helical span at residues 280–300 (FNLFLTLIICNAIIDPLIYAF). The Cytoplasmic portion of the chain corresponds to 301-317 (RSQELRRTLKKVLLCSW). Cysteine 315 carries the S-palmitoyl cysteine lipid modification.

It belongs to the G-protein coupled receptor 1 family. As to quaternary structure, interacts with MGRN1, but does not undergo MGRN1-mediated ubiquitination; this interaction competes with GNAS-binding and thus inhibits agonist-induced cAMP production. Interacts with OPN3; the interaction results in a decrease in MC1R-mediated cAMP signaling and ultimately a decrease in melanin production in melanocytes.

The protein localises to the cell membrane. Functionally, receptor for MSH (alpha, beta and gamma) and ACTH. The activity of this receptor is mediated by G proteins which activate adenylate cyclase. Mediates melanogenesis, the production of eumelanin (black/brown) and phaeomelanin (red/yellow), via regulation of cAMP signaling in melanocytes. The sequence is that of Melanocyte-stimulating hormone receptor (MC1R) from Trachypithecus francoisi (Francois' leaf monkey).